The following is a 116-amino-acid chain: Large ribosomal subunit protein uL24 (116 aa).

Positions 1-21 (MATNNGAGKARHKFHVKKGDT) are disordered.

It belongs to the universal ribosomal protein uL24 family. As to quaternary structure, part of the 50S ribosomal subunit.

In terms of biological role, one of two assembly initiator proteins, it binds directly to the 5'-end of the 23S rRNA, where it nucleates assembly of the 50S subunit. One of the proteins that surrounds the polypeptide exit tunnel on the outside of the subunit. This chain is Large ribosomal subunit protein uL24, found in Gloeobacter violaceus (strain ATCC 29082 / PCC 7421).